The primary structure comprises 135 residues: Immunity protein RhsIA (135 aa).

The tract at residues 58–77 is disordered; sequence RKQGRQISLSCGEPPEYSPD.

In terms of biological role, immunity component of a toxin-immunity protein module, which functions as a cellular contact-dependent growth inhibition (CDI) system. Specifically inhibits its cognate toxin RhsA. Cell contact is necessary for growth inhibition. This chain is Immunity protein RhsIA (rhsIA), found in Dickeya dadantii (strain 3937) (Erwinia chrysanthemi (strain 3937)).